The chain runs to 148 residues: Ribosome-binding factor A (148 aa).

Residues 120 to 148 (AKAREGASYAGDADPYRTAEPDADDAPRA) form a disordered region. Positions 133-148 (DPYRTAEPDADDAPRA) are enriched in basic and acidic residues.

This sequence belongs to the RbfA family. Monomer. Binds 30S ribosomal subunits, but not 50S ribosomal subunits or 70S ribosomes.

It localises to the cytoplasm. Functionally, one of several proteins that assist in the late maturation steps of the functional core of the 30S ribosomal subunit. Associates with free 30S ribosomal subunits (but not with 30S subunits that are part of 70S ribosomes or polysomes). Required for efficient processing of 16S rRNA. May interact with the 5'-terminal helix region of 16S rRNA. The polypeptide is Ribosome-binding factor A (Micrococcus luteus (strain ATCC 4698 / DSM 20030 / JCM 1464 / CCM 169 / CCUG 5858 / IAM 1056 / NBRC 3333 / NCIMB 9278 / NCTC 2665 / VKM Ac-2230) (Micrococcus lysodeikticus)).